A 519-amino-acid chain; its full sequence is Cytochrome P450 monooxygenase AtmP (519 aa).

A helical transmembrane segment spans residues 21–41 (SMLLVVTLVILFLWFIIPSPV). Cys-457 lines the heme pocket.

It belongs to the cytochrome P450 family. The cofactor is heme.

It is found in the membrane. Its pathway is secondary metabolite biosynthesis. Functionally, cytochrome P450 monooxygenase; part of the ATM2 gene cluster that mediates the biosynthesis of aflatrem, a tremorgenic mycotoxin with acute neurotoxic effects. Synthesis of geranylgeranyl diphosphate (GGPP) by AtmG (a GGPP synthase) precedes condensation of GGPP with indole 3-glycerol phosphate, followed by epoxidation and cyclization by AtmM (a FAD-dependent monooxygenase) and AtmC (a prenyltransferase) to produce paspaline. AtmB is also essential for paspaline production, but its exact role has not been identified yet. AtmP, a cytochrome P450 monooxygenase, subsequently converts paspaline to 13-desoxypaxilline via PC-M6 by removal of the C-30 methyl group and oxidation at C-10. AtmQ, a cytochrome P450 monooxygenase, then catalyzes the oxidation of 13-desoxypaxilline, first at C-7 to produce paspalicine and then at C-13 to form paspalinine. Finally, AtmD prenylates paspalinine to form aflatrem. The chain is Cytochrome P450 monooxygenase AtmP from Aspergillus flavus.